A 197-amino-acid polypeptide reads, in one-letter code: MSNSFSLIPLPLVDQRYAQALFDLAQEEGLVEILEKAVESFLMVLDQDEDLKHFVQSPFFSVKEQVKVMHSVCENIPFADEGAGQILSRFLRVITLNHRLRALSGILHAFQRRVALSRREFSAQIIAARPLNSQQEQQLQSVLESVVGGKVFLNICVDPEILGGLIIRLGSSQIDTSLMAKLSSLKIALKKRSADGY.

This sequence belongs to the ATPase delta chain family. F-type ATPases have 2 components, F(1) - the catalytic core - and F(0) - the membrane proton channel. F(1) has five subunits: alpha(3), beta(3), gamma(1), delta(1), epsilon(1). F(0) has three main subunits: a(1), b(2) and c(10-14). The alpha and beta chains form an alternating ring which encloses part of the gamma chain. F(1) is attached to F(0) by a central stalk formed by the gamma and epsilon chains, while a peripheral stalk is formed by the delta and b chains.

Its subcellular location is the cell inner membrane. Functionally, f(1)F(0) ATP synthase produces ATP from ADP in the presence of a proton or sodium gradient. F-type ATPases consist of two structural domains, F(1) containing the extramembraneous catalytic core and F(0) containing the membrane proton channel, linked together by a central stalk and a peripheral stalk. During catalysis, ATP synthesis in the catalytic domain of F(1) is coupled via a rotary mechanism of the central stalk subunits to proton translocation. In terms of biological role, this protein is part of the stalk that links CF(0) to CF(1). It either transmits conformational changes from CF(0) to CF(1) or is implicated in proton conduction. This Bartonella henselae (strain ATCC 49882 / DSM 28221 / CCUG 30454 / Houston 1) (Rochalimaea henselae) protein is ATP synthase subunit delta.